Consider the following 434-residue polypeptide: Asparagine--tRNA ligase (434 aa).

The protein belongs to the class-II aminoacyl-tRNA synthetase family. As to quaternary structure, homodimer.

The protein resides in the cytoplasm. The enzyme catalyses tRNA(Asn) + L-asparagine + ATP = L-asparaginyl-tRNA(Asn) + AMP + diphosphate + H(+). The chain is Asparagine--tRNA ligase from Oenococcus oeni (strain ATCC BAA-331 / PSU-1).